We begin with the raw amino-acid sequence, 224 residues long: ATP-dependent dethiobiotin synthetase BioD (224 aa).

12–17 (GVGKTF) lines the ATP pocket. T16 contacts Mg(2+). K37 is a catalytic residue. T41 lines the substrate pocket. Residue E107 coordinates Mg(2+). Residues 107-110 (EGAG), 167-168 (GS), 197-199 (PEG), and E204 each bind ATP.

The protein belongs to the dethiobiotin synthetase family. In terms of assembly, homodimer. It depends on Mg(2+) as a cofactor.

It localises to the cytoplasm. It carries out the reaction (7R,8S)-7,8-diammoniononanoate + CO2 + ATP = (4R,5S)-dethiobiotin + ADP + phosphate + 3 H(+). Its pathway is cofactor biosynthesis; biotin biosynthesis; biotin from 7,8-diaminononanoate: step 1/2. Its function is as follows. Catalyzes a mechanistically unusual reaction, the ATP-dependent insertion of CO2 between the N7 and N8 nitrogen atoms of 7,8-diaminopelargonic acid (DAPA, also called 7,8-diammoniononanoate) to form a ureido ring. The chain is ATP-dependent dethiobiotin synthetase BioD from Corynebacterium glutamicum (strain R).